A 437-amino-acid chain; its full sequence is uncharacterized protein (437 aa).

Positions proline 63–proline 87 are enriched in polar residues. 3 disordered regions span residues proline 63–proline 97, valine 112–threonine 147, and proline 346–tryptophan 437. Over residues glutamate 399–aspartate 409 the composition is skewed to polar residues. Over residues lysine 425–tryptophan 437 the composition is skewed to low complexity.

This is an uncharacterized protein from Caenorhabditis elegans.